We begin with the raw amino-acid sequence, 213 residues long: GrpE protein homolog, mitochondrial (213 aa).

The interval 35-55 (STEKQPEEATEQKATESSPEV) is disordered. The segment covering 38–55 (KQPEEATEQKATESSPEV) has biased composition (basic and acidic residues).

The protein belongs to the GrpE family. In terms of assembly, probable component of the PAM complex at least composed of a mitochondrial HSP70 protein, Roe1, TIM44, blp/TIM16 and TIM14.

It is found in the mitochondrion matrix. Functionally, essential component of the PAM complex, a complex required for the translocation of transit peptide-containing proteins from the inner membrane into the mitochondrial matrix in an ATP-dependent manner. Seems to control the nucleotide-dependent binding of mitochondrial HSP70 to substrate proteins. The polypeptide is GrpE protein homolog, mitochondrial (Roe1) (Drosophila melanogaster (Fruit fly)).